The following is a 38-amino-acid chain: Photosystem II reaction center protein Y (38 aa).

The Lumenal segment spans residues 1-4 (MSMR). The chain crosses the membrane as a helical span at residues 5 to 23 (LVVVLLPLGIALGWAVYNI). Over 24-38 (GKLAIEQWRRTGSKV) the chain is Stromal.

This sequence belongs to the PsbY family. As to quaternary structure, PSII is composed of 1 copy each of membrane proteins PsbA, PsbB, PsbC, PsbD, PsbE, PsbF, PsbH, PsbI, PsbJ, PsbK, PsbL, PsbM, PsbT, PsbX, PsbY, PsbZ, Psb30/Ycf12, at least 3 peripheral proteins of the oxygen-evolving complex and a large number of cofactors. It forms dimeric complexes.

It is found in the plastid. The protein resides in the cyanelle thylakoid membrane. Loosely associated component of the core of photosystem II (PSII), it is not always seen in crystals. PSII is a light-driven water plastoquinone oxidoreductase, using light energy to abstract electrons from H(2)O, generating a proton gradient subsequently used for ATP formation. This Cyanophora paradoxa protein is Photosystem II reaction center protein Y.